We begin with the raw amino-acid sequence, 406 residues long: Protease ElaD (406 aa).

His234 is a catalytic residue. Residue Cys316 is the Nucleophile of the active site.

The protein belongs to the peptidase C79 family.

Protease that can act as an efficient and specific deubiquitinating enzyme in vitro. Does not possess desumoylating and deneddylating activities. The physiological substrate is unknown. In Escherichia coli O139:H28 (strain E24377A / ETEC), this protein is Protease ElaD (elaD).